We begin with the raw amino-acid sequence, 227 residues long: Cytochrome c oxidase subunit 2 (227 aa).

Over 1–14 the chain is Mitochondrial intermembrane; the sequence is MAYPMQLGFQDATS. A helical membrane pass occupies residues 15–45; that stretch reads PIMEELLHFHDHTLMIVFLISSLVLYIISLM. Residues 46–59 are Mitochondrial matrix-facing; that stretch reads LTTKLTHTSTMDAQ. Residues 60-87 form a helical membrane-spanning segment; sequence EVETVWTILPAVILIMIALPSLRILYMM. At 88 to 227 the chain is on the mitochondrial intermembrane side; it reads DEINNPSLTV…HFEKWSASML (140 aa). Residues H161, C196, E198, C200, H204, and M207 each contribute to the Cu cation site. E198 contributes to the Mg(2+) binding site.

This sequence belongs to the cytochrome c oxidase subunit 2 family. In terms of assembly, component of the cytochrome c oxidase (complex IV, CIV), a multisubunit enzyme composed of 14 subunits. The complex is composed of a catalytic core of 3 subunits MT-CO1, MT-CO2 and MT-CO3, encoded in the mitochondrial DNA, and 11 supernumerary subunits COX4I, COX5A, COX5B, COX6A, COX6B, COX6C, COX7A, COX7B, COX7C, COX8 and NDUFA4, which are encoded in the nuclear genome. The complex exists as a monomer or a dimer and forms supercomplexes (SCs) in the inner mitochondrial membrane with NADH-ubiquinone oxidoreductase (complex I, CI) and ubiquinol-cytochrome c oxidoreductase (cytochrome b-c1 complex, complex III, CIII), resulting in different assemblies (supercomplex SCI(1)III(2)IV(1) and megacomplex MCI(2)III(2)IV(2)). Found in a complex with TMEM177, COA6, COX18, COX20, SCO1 and SCO2. Interacts with TMEM177 in a COX20-dependent manner. Interacts with COX20. Interacts with COX16. The cofactor is Cu cation.

Its subcellular location is the mitochondrion inner membrane. The enzyme catalyses 4 Fe(II)-[cytochrome c] + O2 + 8 H(+)(in) = 4 Fe(III)-[cytochrome c] + 2 H2O + 4 H(+)(out). Its function is as follows. Component of the cytochrome c oxidase, the last enzyme in the mitochondrial electron transport chain which drives oxidative phosphorylation. The respiratory chain contains 3 multisubunit complexes succinate dehydrogenase (complex II, CII), ubiquinol-cytochrome c oxidoreductase (cytochrome b-c1 complex, complex III, CIII) and cytochrome c oxidase (complex IV, CIV), that cooperate to transfer electrons derived from NADH and succinate to molecular oxygen, creating an electrochemical gradient over the inner membrane that drives transmembrane transport and the ATP synthase. Cytochrome c oxidase is the component of the respiratory chain that catalyzes the reduction of oxygen to water. Electrons originating from reduced cytochrome c in the intermembrane space (IMS) are transferred via the dinuclear copper A center (CU(A)) of subunit 2 and heme A of subunit 1 to the active site in subunit 1, a binuclear center (BNC) formed by heme A3 and copper B (CU(B)). The BNC reduces molecular oxygen to 2 water molecules using 4 electrons from cytochrome c in the IMS and 4 protons from the mitochondrial matrix. The sequence is that of Cytochrome c oxidase subunit 2 (MT-CO2) from Tragelaphus imberbis (Lesser kudu).